The chain runs to 271 residues: 2,3,4,5-tetrahydropyridine-2,6-dicarboxylate N-succinyltransferase (271 aa).

Substrate is bound by residues Arg102 and Asp139.

It belongs to the transferase hexapeptide repeat family. In terms of assembly, homotrimer.

It localises to the cytoplasm. It catalyses the reaction (S)-2,3,4,5-tetrahydrodipicolinate + succinyl-CoA + H2O = (S)-2-succinylamino-6-oxoheptanedioate + CoA. It participates in amino-acid biosynthesis; L-lysine biosynthesis via DAP pathway; LL-2,6-diaminopimelate from (S)-tetrahydrodipicolinate (succinylase route): step 1/3. In Coxiella burnetii (strain RSA 331 / Henzerling II), this protein is 2,3,4,5-tetrahydropyridine-2,6-dicarboxylate N-succinyltransferase.